The chain runs to 201 residues: NAD(P)H-dependent FMN reductase ntnL (201 aa).

FMN is bound by residues Arg12, 90 to 93, and Tyr120; that span reads EYNG.

In terms of assembly, homodimer.

It catalyses the reaction FMNH2 + NADP(+) = FMN + NADPH + 2 H(+). The catalysed reaction is FMNH2 + NAD(+) = FMN + NADH + 2 H(+). The protein operates within secondary metabolite biosynthesis; terpenoid biosynthesis. Functionally, NAD(P)H-dependent FMN reductase; part of the gene cluster that mediates the biosynthesis of the meroterpenoids nectripenoids A and B, as well as cochliquninone D and isocochliquninone E. The pathway probably begins with the HR-PKS ntnH that catalyzes two chain-extension steps to form a reduced triketide, which then primes the SAT domain in the NR-PKS ntnG to initiate three more cycles of extension to give a linear hexaketide corresponding to the polyketide part of nectripenoids. The FAD-dependent monooxygenase ntnJ then performs an oxidative decarboxylation at C11 of the ntnH/ntnG product, via an electrophilic aromatic hydroxylation with concomitant ipso-decarboxylation. The membrane-bound polyprenyl transferase ntnF then introduces a farnesyl group before the FAD-dependent monooxygenase ntnK functions as the first epoxidase on terminal C12'-C13' olefin, followed by a second epoxidation on C7'-C8' catalyzed by ntnA. The terpene cyclase/mutase ntnI then initiates the sequential tricyclic ring formation through protonation of the terminal epoxide and catalyzes the regioselective and stereoselective 6/6/6-tricyclic ring formation. The cytochrome P450 monooxygenase ntnM may then hydroxylate C1'. The sequence is that of NAD(P)H-dependent FMN reductase ntnL from Nectria sp.